We begin with the raw amino-acid sequence, 549 residues long: Dihydroxy-acid dehydratase (549 aa).

Asp-78 lines the Mg(2+) pocket. Cys-119 contributes to the [2Fe-2S] cluster binding site. Residues Asp-120 and Lys-121 each contribute to the Mg(2+) site. An N6-carboxylysine modification is found at Lys-121. Cys-192 is a [2Fe-2S] cluster binding site. Glu-439 contributes to the Mg(2+) binding site. Residue Ser-465 is the Proton acceptor of the active site.

It belongs to the IlvD/Edd family. In terms of assembly, homodimer. [2Fe-2S] cluster serves as cofactor. It depends on Mg(2+) as a cofactor.

It catalyses the reaction (2R)-2,3-dihydroxy-3-methylbutanoate = 3-methyl-2-oxobutanoate + H2O. The enzyme catalyses (2R,3R)-2,3-dihydroxy-3-methylpentanoate = (S)-3-methyl-2-oxopentanoate + H2O. Its pathway is amino-acid biosynthesis; L-isoleucine biosynthesis; L-isoleucine from 2-oxobutanoate: step 3/4. It participates in amino-acid biosynthesis; L-valine biosynthesis; L-valine from pyruvate: step 3/4. Functions in the biosynthesis of branched-chain amino acids. Catalyzes the dehydration of (2R,3R)-2,3-dihydroxy-3-methylpentanoate (2,3-dihydroxy-3-methylvalerate) into 2-oxo-3-methylpentanoate (2-oxo-3-methylvalerate) and of (2R)-2,3-dihydroxy-3-methylbutanoate (2,3-dihydroxyisovalerate) into 2-oxo-3-methylbutanoate (2-oxoisovalerate), the penultimate precursor to L-isoleucine and L-valine, respectively. The sequence is that of Dihydroxy-acid dehydratase from Endomicrobium trichonymphae.